The following is a 768-amino-acid chain: Levansucrase (768 aa).

The first 36 residues, methionine 1–alanine 36, serve as a signal peptide directing secretion. Composition is skewed to polar residues over residues serine 57 to leucine 68, threonine 80 to asparagine 99, serine 106 to aspartate 134, and asparagine 143 to serine 153. The tract at residues serine 57–leucine 158 is disordered. Sucrose is bound by residues tryptophan 250, aspartate 251, and serine 320. The active-site Nucleophile is the aspartate 251. A Ca(2+)-binding site is contributed by aspartate 398. Sucrose is bound by residues arginine 403 and aspartate 404. Ca(2+)-binding residues include glutamine 429, asparagine 468, and aspartate 502. Glutamate 503 contributes to the sucrose binding site. Catalysis depends on glutamate 505, which acts as the Proton donor/acceptor. A sucrose-binding site is contributed by arginine 523. A disordered region spans residues histidine 688 to glycine 736. The span at valine 691–threonine 727 shows a compositional bias: low complexity. The LPXTG sorting signal motif lies at leucine 732–glycine 736. Position 735 is a pentaglycyl murein peptidoglycan amidated alanine (alanine 735). The propeptide at glycine 736 to asparagine 768 is removed by sortase.

Belongs to the glycosyl hydrolase 68 family.

The protein resides in the secreted. It localises to the cell wall. The protein localises to the cell surface. It catalyses the reaction [6)-beta-D-fructofuranosyl-(2-&gt;](n) alpha-D-glucopyranoside + sucrose = [6)-beta-D-fructofuranosyl-(2-&gt;](n+1) alpha-D-glucopyranoside + D-glucose. Its activity is regulated as follows. Calcium ions are required for optimal activity, but do not seem to be essential since addition of EDTA causes only a 48% drop in activity. Ca(2+) may play an important structural role and promote stability of levansucrase. Fructosyltransferase that catalyzes the polymerization of the fructose moiety of sucrose to produce levan polymer and the fructo-oligosaccharide (FOS) 1-kestose. Is also able to convert raffinose into a fructan polymer and a single oligosaccharide (most likely Gal-Glc-Frc-Frc) in vitro; however, L.gasseri strain DSM 20077 is unable to ferment raffinose. Also displays sucrose hydrolase activity. This Lactobacillus gasseri protein is Levansucrase.